Consider the following 475-residue polypeptide: Ribulose bisphosphate carboxylase large chain (475 aa).

Position 14 is an N6,N6,N6-trimethyllysine (Lys14). Substrate is bound by residues Asn123 and Thr173. The active-site Proton acceptor is the Lys175. Position 177 (Lys177) interacts with substrate. Mg(2+)-binding residues include Lys201, Asp203, and Glu204. At Lys201 the chain carries N6-carboxylysine. His294 acts as the Proton acceptor in catalysis. Substrate contacts are provided by Arg295, His327, and Ser379.

This sequence belongs to the RuBisCO large chain family. Type I subfamily. Heterohexadecamer of 8 large chains and 8 small chains; disulfide-linked. The disulfide link is formed within the large subunit homodimers. Mg(2+) is required as a cofactor. Post-translationally, the disulfide bond which can form in the large chain dimeric partners within the hexadecamer appears to be associated with oxidative stress and protein turnover.

It is found in the plastid. It carries out the reaction 2 (2R)-3-phosphoglycerate + 2 H(+) = D-ribulose 1,5-bisphosphate + CO2 + H2O. It catalyses the reaction D-ribulose 1,5-bisphosphate + O2 = 2-phosphoglycolate + (2R)-3-phosphoglycerate + 2 H(+). In terms of biological role, ruBisCO catalyzes two reactions: the carboxylation of D-ribulose 1,5-bisphosphate, the primary event in carbon dioxide fixation, as well as the oxidative fragmentation of the pentose substrate in the photorespiration process. Both reactions occur simultaneously and in competition at the same active site. This Euglena longa (Euglenophycean alga) protein is Ribulose bisphosphate carboxylase large chain (rbcL).